We begin with the raw amino-acid sequence, 501 residues long: Glutamate--tRNA ligase (501 aa).

The 'HIGH' region signature appears at 11–21 (PSPTGPLHIGG). The 'KMSKS' region signature appears at 260–264 (KLSKR). Residue K263 participates in ATP binding.

It belongs to the class-I aminoacyl-tRNA synthetase family. Glutamate--tRNA ligase type 1 subfamily. In terms of assembly, monomer.

It localises to the cytoplasm. It carries out the reaction tRNA(Glu) + L-glutamate + ATP = L-glutamyl-tRNA(Glu) + AMP + diphosphate. In terms of biological role, catalyzes the attachment of glutamate to tRNA(Glu) in a two-step reaction: glutamate is first activated by ATP to form Glu-AMP and then transferred to the acceptor end of tRNA(Glu). The polypeptide is Glutamate--tRNA ligase (Flavobacterium johnsoniae (strain ATCC 17061 / DSM 2064 / JCM 8514 / BCRC 14874 / CCUG 350202 / NBRC 14942 / NCIMB 11054 / UW101) (Cytophaga johnsonae)).